The sequence spans 1113 residues: Atrial natriuretic peptide-converting enzyme (1113 aa).

Topologically, residues 1-112 (MGRVSFSVRV…QKLVTANLLR (112 aa)) are cytoplasmic. The helical; Signal-anchor for type II membrane protein transmembrane segment at 113-133 (FLLLVLIPCICALIVLLAILL) threads the bilayer. The Extracellular portion of the chain corresponds to 134 to 1113 (SFVGTLKRVY…QTFLQKKSQG (980 aa)). Asparagine 147, asparagine 202, and asparagine 208 each carry an N-linked (GlcNAc...) asparagine glycan. The tract at residues 176–202 (APSLPPSQSTPAWTPRAPSPEDQSHRN) is disordered. Residues 201–327 (RNTSTCMNIT…SSVRKSCFSL (127 aa)) form the FZ 1 domain. Disulfide bonds link cysteine 206-cysteine 266, cysteine 214-cysteine 259, cysteine 250-cysteine 290, cysteine 279-cysteine 324, cysteine 283-cysteine 307, cysteine 337-cysteine 350, cysteine 345-cysteine 363, and cysteine 357-cysteine 372. Asparagine 298 and asparagine 317 each carry an N-linked (GlcNAc...) asparagine glycan. LDL-receptor class A domains lie at 336-372 (LCGG…EAHC), 373-408 (NCSK…EQNC), 409-445 (DCNL…EVNC), and 446-483 (SCHS…ENCS). N-linked (GlcNAc...) asparagine glycosylation is present at asparagine 373. 9 disulfide bridges follow: cysteine 374–cysteine 386, cysteine 381–cysteine 399, cysteine 393–cysteine 408, cysteine 410–cysteine 423, cysteine 418–cysteine 436, cysteine 430–cysteine 445, cysteine 447–cysteine 460, cysteine 455–cysteine 473, and cysteine 467–cysteine 482. Asparagine 411 is a glycosylation site (N-linked (GlcNAc...) asparagine). N-linked (GlcNAc...) asparagine glycosylation is present at asparagine 444. Residues asparagine 481, asparagine 519, and asparagine 537 are each glycosylated (N-linked (GlcNAc...) asparagine). Positions 518–641 (SNCSQCEPIT…SSDNQTCLLP (124 aa)) constitute an FZ 2 domain. Cystine bridges form between cysteine 523–cysteine 586, cysteine 531–cysteine 579, cysteine 570–cysteine 608, cysteine 597–cysteine 638, cysteine 601–cysteine 625, cysteine 648–cysteine 660, cysteine 655–cysteine 673, cysteine 667–cysteine 682, cysteine 684–cysteine 698, cysteine 692–cysteine 711, cysteine 705–cysteine 720, cysteine 723–cysteine 735, cysteine 730–cysteine 748, and cysteine 742–cysteine 757. Asparagine 635 carries N-linked (GlcNAc...) asparagine glycosylation. 3 LDL-receptor class A domains span residues 647-682 (ECSP…EENC), 683-721 (GCKE…KNCS), and 722-757 (FCQD…EWGC). Residue asparagine 719 is glycosylated (N-linked (GlcNAc...) asparagine). In terms of domain architecture, SRCR spans 758–853 (VTLSKNGNSS…SRSEISLLCS (96 aa)). N-linked (GlcNAc...) asparagine glycans are attached at residues asparagine 765 and asparagine 828. 6 disulfides stabilise this stretch: cysteine 782–cysteine 884, cysteine 857–cysteine 979, cysteine 895–cysteine 911, cysteine 993–cysteine 1058, cysteine 1022–cysteine 1037, and cysteine 1048–cysteine 1077. One can recognise a Peptidase S1 domain in the interval 869–1102 (ILGGRTSRPG…FVGWIERQIY (234 aa)). Active-site charge relay system residues include histidine 910 and aspartate 959. A glycan (N-linked (GlcNAc...) asparagine) is linked at asparagine 970. Residue serine 1052 is the Charge relay system of the active site. Asparagine 1089 carries N-linked (GlcNAc...) asparagine glycosylation.

Belongs to the peptidase S1 family. Post-translationally, N-glycosylated; required for processing and activation. In terms of processing, activated through proteolytic processing by a trypsin-like protease; cleaved into a N-terminal propeptide and an activated corin protease fragment. Atrial natriuretic peptide-converting enzyme, 180 kDa soluble fragment is produced by cleavage by ADAM10. Cleavage by ADAM10 to produce soluble 180 kDa soluble fragment takes place after the transmembrane region and before FZ 1. A disulfide bond links the activated corin protease fragment and the N-terminal propeptide. The disulfide bond also links the activated corin protease fragment with Atrial natriuretic peptide-converting enzyme, 180 kDa soluble fragment. As to expression, highly expressed in heart. Also expressed in pregnant uterus.

The protein resides in the cell membrane. It is found in the secreted. Its function is as follows. Serine-type endopeptidase involved in atrial natriuretic peptide (NPPA) processing. Converts through proteolytic cleavage the non-functional propeptide NPPA into the active hormone, thereby regulating blood pressure in heart and promoting natriuresis, diuresis and vasodilation. Proteolytic cleavage of pro-NPPA also plays a role in female pregnancy by promoting trophoblast invasion and spiral artery remodeling in uterus. Also acts as a regulator of sodium reabsorption in kidney. May also process pro-NPPB the B-type natriuretic peptide. The polypeptide is Atrial natriuretic peptide-converting enzyme (Corin) (Mus musculus (Mouse)).